The sequence spans 295 residues: Protein NEOXANTHIN-DEFICIENT 1 (295 aa).

A disordered region spans residues 221–251; sequence PAKVSGPSESDADKENSSEDQSSNVESVSRV.

In terms of biological role, required for neoxanthin biosynthesis. Probably not involved directly in the enzymatic conversion of violaxanthin to neoxanthin. Is necessary but not sufficient for neoxanthin synthesis. Seems not required for abscisic acid (ABA) biosynthesis in response to drought stress. This Solanum lycopersicum (Tomato) protein is Protein NEOXANTHIN-DEFICIENT 1.